The sequence spans 391 residues: MAIINMSDLDLQGKRVLIREDLNVPVSNGVVTSDARLRASLPTIELALAKGAAVMVMSHLGRPTEGEYNPEYSMQPVVDYLAKALSCPVRLATDYLDGVDVAVGEVVVFENVRFNVGEGKNNEALSQKMAALCDVYVMDAFGTAHRAQASTHGVGMFAPIACAGPLLAQELDALGKALDNPARPMVAIVGGSKVSTKLTVLESLSGIVDQLVVGGGIANTFIAAAGYNVGKSLYEADLIDEAKRLVANAKSRGADIPVPTDVVVAGEFSPTAAATLKSVSEVADGEMIFDIGPDSAEALAKIIESAGTIVWNGPVGVFEFDQFGEGTKRIAQAIADSKAFSIAGGGDTLAAVDKYGIADKVSYISTGGGAFLEFLEGKELPAVAMLEKRGA.

Substrate is bound by residues 21-23, R36, 59-62, R113, and R146; these read DLN and HLGR. Residues K197, E319, and 345 to 348 contribute to the ATP site; that span reads GGDT.

It belongs to the phosphoglycerate kinase family. As to quaternary structure, monomer.

It localises to the cytoplasm. The catalysed reaction is (2R)-3-phosphoglycerate + ATP = (2R)-3-phospho-glyceroyl phosphate + ADP. Its pathway is carbohydrate degradation; glycolysis; pyruvate from D-glyceraldehyde 3-phosphate: step 2/5. This is Phosphoglycerate kinase from Shewanella baltica (strain OS195).